A 419-amino-acid chain; its full sequence is MAGFGAMEKFLVEYKSAVEKKLAEYKCNTNTAIELKLVRFPEDLENDIRTFFPEYTHQLFGDDETAFGYKGLKILLYYIAGSLSTMFRVEYASKVDENFDCVEADDVEGKIRQIIPPGFCTNTNDFLSLLEKEVDFKPFGTLLHTYSVLSPTGGENFTFQIYKADMTCRGFREYHERLQTFLMWFIETASFIDVDDERWHYFLVFEKYNKDGATLFATVGYMTVYNYYVYPDKTRPRVSQMLILTPFQGQGHGAQLLETVHRYYTEFPTVLDITAEDPSKSYVKLRDFVLVKLCQDLPCFSREKLMQGFNEDMVIEAQQKFKINKQHARRVYEILRLLVTDMSDAEQYRSYRLDIKRRLISPYKKKQRDLAKMRKCLRPEELTNQMNQIEISMQHEQLEESFQELVEDYRRVIERLAQE.

Ala-2 carries the N-acetylalanine modification. Lys-9 and Lys-15 each carry N6-acetyllysine. The interval 62–64 (DDE) is interaction with histone H4 N-terminus. At Ser-190 the chain carries Phosphoserine; by AMPK. Residues 225 to 227 (YNY) form an interaction with histone H4 N-terminus region. Acetyl-CoA-binding positions include 241 to 243 (MLI) and 248 to 254 (QGQGHGA). The Proton donor/acceptor role is filled by Glu-276. Ser-343 bears the Phosphoserine mark.

The protein belongs to the HAT1 family. In terms of assembly, catalytic subunit of the type B histone acetyltransferase (HAT) complex, composed of RBBP7 and HAT1. Interacts with histones H4 and H2A. The interaction is dependent of the ability of RBBP7 to bind to the N-terminus of histones. Component of the histone H3.1 and H3.3 complexes. Post-translationally, phosphorylated by AMPK at Ser-190; phosphorylation increases HAT1 activity.

It localises to the nucleus matrix. The protein resides in the mitochondrion. It is found in the cytoplasm. Its subcellular location is the nucleus. The protein localises to the nucleoplasm. It carries out the reaction L-lysyl-[protein] + acetyl-CoA = N(6)-acetyl-L-lysyl-[protein] + CoA + H(+). Histone acetyltransferase that plays a role in different biological processes including cell cycle progression, glucose metabolism, histone production or DNA damage repair. Coordinates histone production and acetylation via H4 promoter binding. Acetylates histone H4 at 'Lys-5' (H4K5ac) and 'Lys-12' (H4K12ac) and, to a lesser extent, histone H2A at 'Lys-5' (H2AK5ac). Drives H4 production by chromatin binding to support chromatin replication and acetylation. Since transcription of H4 genes is tightly coupled to S-phase, plays an important role in S-phase entry and progression. Promotes homologous recombination in DNA repair by facilitating histone turnover and incorporation of acetylated H3.3 at sites of double-strand breaks. In addition, acetylates other substrates such as chromatin-related proteins. Also acetylates RSAD2 which mediates the interaction of ubiquitin ligase UBE4A with RSAD2 leading to RSAD2 ubiquitination and subsequent degradation. In terms of biological role, (Microbial infection) Contributes to hepatitis B virus (HBV) replication by acetylating histone H4 at the sites of 'Lys-5' and 'Lys-12' on the covalently closed circular DNA (cccDNA) minichromosome leading to its accumulation within the host cell. This is Histone acetyltransferase type B catalytic subunit (HAT1) from Homo sapiens (Human).